A 270-amino-acid polypeptide reads, in one-letter code: Tryptophan synthase alpha chain (270 aa).

Active-site proton acceptor residues include glutamate 49 and aspartate 60.

It belongs to the TrpA family. In terms of assembly, tetramer of two alpha and two beta chains.

It catalyses the reaction (1S,2R)-1-C-(indol-3-yl)glycerol 3-phosphate + L-serine = D-glyceraldehyde 3-phosphate + L-tryptophan + H2O. It participates in amino-acid biosynthesis; L-tryptophan biosynthesis; L-tryptophan from chorismate: step 5/5. In terms of biological role, the alpha subunit is responsible for the aldol cleavage of indoleglycerol phosphate to indole and glyceraldehyde 3-phosphate. In Pseudomonas savastanoi pv. phaseolicola (strain 1448A / Race 6) (Pseudomonas syringae pv. phaseolicola (strain 1448A / Race 6)), this protein is Tryptophan synthase alpha chain.